Reading from the N-terminus, the 80-residue chain is Acyl carrier protein (80 aa).

The region spanning 4–79 (EAILEKVRSI…DAVKYIEDKQ (76 aa)) is the Carrier domain. S39 carries the post-translational modification O-(pantetheine 4'-phosphoryl)serine.

Belongs to the acyl carrier protein (ACP) family. Post-translationally, 4'-phosphopantetheine is transferred from CoA to a specific serine of apo-ACP by AcpS. This modification is essential for activity because fatty acids are bound in thioester linkage to the sulfhydryl of the prosthetic group.

The protein resides in the cytoplasm. It participates in lipid metabolism; fatty acid biosynthesis. Functionally, carrier of the growing fatty acid chain in fatty acid biosynthesis. The chain is Acyl carrier protein from Parasynechococcus marenigrum (strain WH8102).